The chain runs to 352 residues: tRNA pseudouridine synthase D (352 aa).

Residue aspartate 81 is the Nucleophile of the active site. The TRUD domain occupies 157–303; the sequence is GVPNYFGLQR…MLHERRILRL (147 aa).

Belongs to the pseudouridine synthase TruD family.

It carries out the reaction uridine(13) in tRNA = pseudouridine(13) in tRNA. Functionally, responsible for synthesis of pseudouridine from uracil-13 in transfer RNAs. In Azotobacter vinelandii (strain DJ / ATCC BAA-1303), this protein is tRNA pseudouridine synthase D.